The primary structure comprises 132 residues: FPRL1 inhibitory protein (132 aa).

An N-terminal signal peptide occupies residues 1–28; that stretch reads MKKNITKVIIASTVIATGLLTQTNDAKA.

The protein belongs to the CHIPS/FLIPr family.

It localises to the secreted. Functionally, may be involved in countering the first line of host defense mechanisms. Impairs the leukocyte response to FPRL1 agonists by binding directly to host FPRL1. This Staphylococcus aureus (strain MW2) protein is FPRL1 inhibitory protein (flr).